A 227-amino-acid polypeptide reads, in one-letter code: MIVVVDDRDMVTEGYSSWFGREGITTTGFTPTDFDEWVESVPEQDIMAIEAFLIGECADQHRLPARIRERCKAPVIAVNDRPSLEHTLELFQSGVDDVVRKPVHVREILARINAIRRRAGASATSGADGTQLGPIRVFSDGRDPQINGIDFPLPRRERRILEYLIANRGRRLNKVQIFSAIYGIFDSEVEENVVESHISKLRKKLRGQLGFDPIDSKRFLGYCINIE.

The region spanning 1 to 116 is the Response regulatory domain; that stretch reads MIVVVDDRDM…EILARINAIR (116 aa). Residues 127–226 constitute a DNA-binding region (ompR/PhoB-type); the sequence is ADGTQLGPIR…KRFLGYCINI (100 aa).

Functionally, required for transcription of flagellar genes. The protein is Flagellar transcriptional regulator FtcR (ftcR) of Brucella abortus (strain 2308).